The chain runs to 137 residues: Sch210972 biosynthesis cluster protein E (137 aa).

Over residues 1-12 (MTKYTSVNSSLP) the composition is skewed to polar residues. The segment at 1–137 (MTKYTSVNSS…ASTIRPPCCG (137 aa)) is disordered. Residues 15 to 27 (PRQTTPTRPATQT) are compositionally biased toward low complexity. The span at 51–71 (GSLNGSPTLRTTLDTSLSGTR) shows a compositional bias: polar residues. Residues 94-109 (DEDHPHDPGPDSDAKK) show a composition bias toward basic and acidic residues.

It participates in secondary metabolite biosynthesis. Its function is as follows. Part of the gene cluster that mediates the biosynthesis of the tetramic acid Sch210972, a potential anti-HIV fungal natural product that contains a decalin core. The PKS module of cghG together with the enoylreductase cghC catalyze the formation of the polyketide unit which is then conjugated to 4-hydroxyl-4-methyl glutamate (HMG) by the condensation domain of the cghG NRPS module. One unique structural feature of Sch210972 is the tetramic acid motif proposed to be derived from the non-proteinogenic amino acid HMG, by a Dieckmann-type condensation catalyzed by the reductase domain of cghG. The aldolase cghB catalyzes the aldol condensation of 2 molecules of pyruvic acid to yield the intermediate 4-hydroxyl-4-methyl-2-oxoglutarate (HMOG), which can then be stereoselectively transaminated by an unidentified enzyme to form HMG. The Diels-Alderase cghA then uses the Dieckmann product released by cghG as substrate and catalyzes the Diels-Alder cycloaddition to form the decalin ring of Sch210972. CghA also suppresses the nonenzymatic formation of the alternative stereoisomer. This is Sch210972 biosynthesis cluster protein E from Chaetomium globosum (strain ATCC 6205 / CBS 148.51 / DSM 1962 / NBRC 6347 / NRRL 1970) (Soil fungus).